The chain runs to 325 residues: 5-dehydro-2-deoxygluconokinase (325 aa).

Belongs to the carbohydrate kinase PfkB family.

The catalysed reaction is 5-dehydro-2-deoxy-D-gluconate + ATP = 6-phospho-5-dehydro-2-deoxy-D-gluconate + ADP + H(+). The protein operates within polyol metabolism; myo-inositol degradation into acetyl-CoA; acetyl-CoA from myo-inositol: step 5/7. Functionally, catalyzes the phosphorylation of 5-dehydro-2-deoxy-D-gluconate (2-deoxy-5-keto-D-gluconate or DKG) to 6-phospho-5-dehydro-2-deoxy-D-gluconate (DKGP). The polypeptide is 5-dehydro-2-deoxygluconokinase (Listeria monocytogenes serotype 4b (strain CLIP80459)).